Reading from the N-terminus, the 157-residue chain is 6,7-dimethyl-8-ribityllumazine synthase 1 (157 aa).

Residues Phe-22, 53-55 (ALE), and 82-84 (TVI) each bind 5-amino-6-(D-ribitylamino)uracil. 87–88 (ET) contacts (2S)-2-hydroxy-3-oxobutyl phosphate. His-90 serves as the catalytic Proton donor. Asn-115 contacts 5-amino-6-(D-ribitylamino)uracil. Arg-129 contributes to the (2S)-2-hydroxy-3-oxobutyl phosphate binding site.

It belongs to the DMRL synthase family. Homopentamer.

The catalysed reaction is (2S)-2-hydroxy-3-oxobutyl phosphate + 5-amino-6-(D-ribitylamino)uracil = 6,7-dimethyl-8-(1-D-ribityl)lumazine + phosphate + 2 H2O + H(+). It functions in the pathway cofactor biosynthesis; riboflavin biosynthesis; riboflavin from 2-hydroxy-3-oxobutyl phosphate and 5-amino-6-(D-ribitylamino)uracil: step 1/2. Catalyzes the formation of 6,7-dimethyl-8-ribityllumazine by condensation of 5-amino-6-(D-ribitylamino)uracil with 3,4-dihydroxy-2-butanone 4-phosphate. This is the penultimate step in the biosynthesis of riboflavin. In Brucella melitensis biotype 1 (strain ATCC 23456 / CCUG 17765 / NCTC 10094 / 16M), this protein is 6,7-dimethyl-8-ribityllumazine synthase 1 (ribH1).